The sequence spans 157 residues: Class-10 pathogenesis-related protein 1 (157 aa).

The protein belongs to the BetVI family. As to expression, expressed in roots. Detected in nodules and leaves, but not in stems and flowers.

The chain is Class-10 pathogenesis-related protein 1 (PR10-1) from Medicago truncatula (Barrel medic).